Here is a 31-residue protein sequence, read N- to C-terminus: Jingzhaotoxin F7-15.33 (31 aa).

Intrachain disulfides connect cysteine 2-cysteine 16, cysteine 9-cysteine 21, and cysteine 15-cysteine 28.

Belongs to the neurotoxin 10 (Hwtx-1) family. As to expression, expressed by the venom gland.

It localises to the secreted. Its function is as follows. Probable ion channel inhibitor. The polypeptide is Jingzhaotoxin F7-15.33 (Chilobrachys guangxiensis (Chinese earth tiger tarantula)).